Reading from the N-terminus, the 138-residue chain is Photosystem II extrinsic protein U (138 aa).

Positions M1 to A28 are cleaved as a signal peptide. The propeptide occupies L29–G42.

The protein belongs to the PsbU family. PSII is composed of 1 copy each of membrane proteins PsbA, PsbB, PsbC, PsbD, PsbE, PsbF, PsbH, PsbI, PsbJ, PsbK, PsbL, PsbM, PsbT, PsbX, PsbY, PsbZ, Psb30/Ycf12, peripheral proteins PsbO, CyanoQ (PsbQ), PsbU, PsbV and a large number of cofactors. It forms dimeric complexes.

The protein localises to the cellular thylakoid membrane. Its function is as follows. One of the extrinsic, lumenal subunits of photosystem II (PSII). PSII is a light-driven water plastoquinone oxidoreductase, using light energy to abstract electrons from H(2)O, generating a proton gradient subsequently used for ATP formation. The extrinsic proteins stabilize the structure of photosystem II oxygen-evolving complex (OEC), the ion environment of oxygen evolution and protect the OEC against heat-induced inactivation. The polypeptide is Photosystem II extrinsic protein U (Picosynechococcus sp. (strain ATCC 27264 / PCC 7002 / PR-6) (Agmenellum quadruplicatum)).